The sequence spans 369 residues: Anhydro-N-acetylmuramic acid kinase (369 aa).

Residue 11 to 18 (GTSMDAVD) participates in ATP binding.

The protein belongs to the anhydro-N-acetylmuramic acid kinase family.

The enzyme catalyses 1,6-anhydro-N-acetyl-beta-muramate + ATP + H2O = N-acetyl-D-muramate 6-phosphate + ADP + H(+). It functions in the pathway amino-sugar metabolism; 1,6-anhydro-N-acetylmuramate degradation. It participates in cell wall biogenesis; peptidoglycan recycling. In terms of biological role, catalyzes the specific phosphorylation of 1,6-anhydro-N-acetylmuramic acid (anhMurNAc) with the simultaneous cleavage of the 1,6-anhydro ring, generating MurNAc-6-P. Is required for the utilization of anhMurNAc either imported from the medium or derived from its own cell wall murein, and thus plays a role in cell wall recycling. The polypeptide is Anhydro-N-acetylmuramic acid kinase (Idiomarina loihiensis (strain ATCC BAA-735 / DSM 15497 / L2-TR)).